We begin with the raw amino-acid sequence, 284 residues long: Avenin-like b10 (284 aa).

The signal sequence occupies residues 1-18 (MKVFILALLALAATTAIA).

Belongs to the prolamin family. Post-translationally, contains disulfide bonds.

Seed storage protein. Might be integrated via inter-chain disulfide bonds within the glutenin polymer. The protein is Avenin-like b10 of Triticum aestivum (Wheat).